We begin with the raw amino-acid sequence, 427 residues long: Glutamate-1-semialdehyde 2,1-aminomutase (427 aa).

N6-(pyridoxal phosphate)lysine is present on lysine 265.

Belongs to the class-III pyridoxal-phosphate-dependent aminotransferase family. HemL subfamily. Homodimer. The cofactor is pyridoxal 5'-phosphate.

It is found in the cytoplasm. The enzyme catalyses (S)-4-amino-5-oxopentanoate = 5-aminolevulinate. It functions in the pathway porphyrin-containing compound metabolism; protoporphyrin-IX biosynthesis; 5-aminolevulinate from L-glutamyl-tRNA(Glu): step 2/2. This is Glutamate-1-semialdehyde 2,1-aminomutase from Neisseria meningitidis serogroup B (strain ATCC BAA-335 / MC58).